Here is a 317-residue protein sequence, read N- to C-terminus: Ribosomal protein L11 methyltransferase (317 aa).

Thr158, Gly179, Asp201, and Asn244 together coordinate S-adenosyl-L-methionine.

It belongs to the methyltransferase superfamily. PrmA family.

It is found in the cytoplasm. The catalysed reaction is L-lysyl-[protein] + 3 S-adenosyl-L-methionine = N(6),N(6),N(6)-trimethyl-L-lysyl-[protein] + 3 S-adenosyl-L-homocysteine + 3 H(+). Its function is as follows. Methylates ribosomal protein L11. This chain is Ribosomal protein L11 methyltransferase, found in Lactococcus lactis subsp. cremoris (strain MG1363).